A 475-amino-acid chain; its full sequence is Ribulose bisphosphate carboxylase large chain (475 aa).

Positions 1–2 (MS) are excised as a propeptide. At Pro-3 the chain carries N-acetylproline. Lys-14 carries the N6,N6,N6-trimethyllysine modification. Positions 123 and 173 each coordinate substrate. Lys-175 serves as the catalytic Proton acceptor. Lys-177 contacts substrate. Mg(2+) contacts are provided by Lys-201, Asp-203, and Glu-204. N6-carboxylysine is present on Lys-201. His-294 functions as the Proton acceptor in the catalytic mechanism. Arg-295, His-327, and Ser-379 together coordinate substrate.

Belongs to the RuBisCO large chain family. Type I subfamily. Heterohexadecamer of 8 large chains and 8 small chains; disulfide-linked. The disulfide link is formed within the large subunit homodimers. Mg(2+) is required as a cofactor. The disulfide bond which can form in the large chain dimeric partners within the hexadecamer appears to be associated with oxidative stress and protein turnover.

It localises to the plastid. The protein localises to the chloroplast. It catalyses the reaction 2 (2R)-3-phosphoglycerate + 2 H(+) = D-ribulose 1,5-bisphosphate + CO2 + H2O. The catalysed reaction is D-ribulose 1,5-bisphosphate + O2 = 2-phosphoglycolate + (2R)-3-phosphoglycerate + 2 H(+). Its function is as follows. RuBisCO catalyzes two reactions: the carboxylation of D-ribulose 1,5-bisphosphate, the primary event in carbon dioxide fixation, as well as the oxidative fragmentation of the pentose substrate in the photorespiration process. Both reactions occur simultaneously and in competition at the same active site. The chain is Ribulose bisphosphate carboxylase large chain from Corylus cornuta (Beaked hazel).